Here is a 313-residue protein sequence, read N- to C-terminus: N-acetyl-gamma-glutamyl-phosphate reductase 2 (313 aa).

Cys117 is an active-site residue.

This sequence belongs to the NAGSA dehydrogenase family. Type 2 subfamily.

The protein resides in the cytoplasm. The enzyme catalyses N-acetyl-L-glutamate 5-semialdehyde + phosphate + NADP(+) = N-acetyl-L-glutamyl 5-phosphate + NADPH + H(+). It functions in the pathway amino-acid biosynthesis; L-arginine biosynthesis; N(2)-acetyl-L-ornithine from L-glutamate: step 3/4. In terms of biological role, catalyzes the NADPH-dependent reduction of N-acetyl-5-glutamyl phosphate to yield N-acetyl-L-glutamate 5-semialdehyde. The polypeptide is N-acetyl-gamma-glutamyl-phosphate reductase 2 (Pseudomonas putida (strain ATCC 47054 / DSM 6125 / CFBP 8728 / NCIMB 11950 / KT2440)).